A 209-amino-acid polypeptide reads, in one-letter code: Large ribosomal subunit protein uL3 (209 aa).

Positions 118–152 are disordered; the sequence is GFQGAIKRHGQSRGPMSHGSRYHRRPGSMGPVDPN.

It belongs to the universal ribosomal protein uL3 family. In terms of assembly, part of the 50S ribosomal subunit. Forms a cluster with proteins L14 and L19.

Functionally, one of the primary rRNA binding proteins, it binds directly near the 3'-end of the 23S rRNA, where it nucleates assembly of the 50S subunit. In Bacillus licheniformis (strain ATCC 14580 / DSM 13 / JCM 2505 / CCUG 7422 / NBRC 12200 / NCIMB 9375 / NCTC 10341 / NRRL NRS-1264 / Gibson 46), this protein is Large ribosomal subunit protein uL3.